We begin with the raw amino-acid sequence, 754 residues long: Protein NUCLEOLAR FACTOR 1 (754 aa).

3 disordered regions span residues 1–56 (MAPN…EAMV), 69–166 (SLGS…ELST), and 390–413 (EDTDDCDGEKTTSKNGNSIKQKSS). Acidic residues predominate over residues 42–52 (SPEESSIEAES). The segment covering 80 to 93 (MNKRRQREEEGKSD) has biased composition (basic and acidic residues). 2 stretches are compositionally biased toward acidic residues: residues 94-110 (TEEDEDDEDEDEEENSG) and 138-161 (DTQEDNDNQSEEEDPDDYETDEEV). Residues 402-413 (SKNGNSIKQKSS) show a composition bias toward polar residues.

Belongs to the UTP25 family. In terms of assembly, component of the ribosomal small subunit (SSU) processome composed of at least 40 protein subunits and snoRNA U3. Interacts with THAL in the nucleus. As to expression, preferentially expressed in differentiating cells in young tissues such as floral buds, ovules, embryos, secondary roots, pollen, young seedlings and vascular bundles. Observed ubiquitously.

Its subcellular location is the nucleus. The protein resides in the nucleolus. Functionally, DEAD-box RNA helicase-like protein required for pre-18S rRNA processing, specifically at sites A0, A1, and A2. Involved in the control of rRNA expression. Required for embryo development and female gametogenesis. This chain is Protein NUCLEOLAR FACTOR 1, found in Arabidopsis thaliana (Mouse-ear cress).